We begin with the raw amino-acid sequence, 482 residues long: Chromosome stability protein 9 (482 aa).

Disordered stretches follow at residues 239–263 (SSLRNSSKNNNGTVTPSTSGRVNKN) and 418–482 (SGLA…RRIR). The span at 240–249 (SLRNSSKNNN) shows a compositional bias: low complexity. Polar residues predominate over residues 250–263 (GTVTPSTSGRVNKN). Positions 418–437 (SGLAFSSSSNSLQQSKLPKS) are enriched in low complexity. 2 stretches are compositionally biased toward polar residues: residues 440 to 453 (LKRSNSTQQLTNTH) and 463 to 473 (RSSNTVLGSSK).

As to quaternary structure, component of the synapsis initiation complex composed of at least ZIP2, ZIP3, MSH4 and MSH5. Also interacts with ZIP1, MRE11, RAD51 and RAD53.

It is found in the nucleus. The protein resides in the chromosome. Component of the synapsis initiation complex (SIC) necessary for the synaptonemal complex assembly. Stabilizes the ZIP2 component to the chromosomes. The SIC complex loads onto chromosomes and nucleates ZIP1 polymerization, a molecular zipper that acts to bring homologous chromosomes in close apposition, which is required for meiotic crossover. May also be involved in double strand break repair. The polypeptide is Chromosome stability protein 9 (CST9) (Saccharomyces cerevisiae (strain ATCC 204508 / S288c) (Baker's yeast)).